A 388-amino-acid polypeptide reads, in one-letter code: NADPH-dependent butanol dehydrogenase (388 aa).

Belongs to the iron-containing alcohol dehydrogenase family.

In terms of biological role, this enzyme has activity using butanol and ethanol as substrates. The sequence is that of NADPH-dependent butanol dehydrogenase (adh1) from Clostridium saccharobutylicum.